A 110-amino-acid polypeptide reads, in one-letter code: Large ribosomal subunit protein uL22 (110 aa).

It belongs to the universal ribosomal protein uL22 family. In terms of assembly, part of the 50S ribosomal subunit.

Functionally, this protein binds specifically to 23S rRNA; its binding is stimulated by other ribosomal proteins, e.g. L4, L17, and L20. It is important during the early stages of 50S assembly. It makes multiple contacts with different domains of the 23S rRNA in the assembled 50S subunit and ribosome. The globular domain of the protein is located near the polypeptide exit tunnel on the outside of the subunit, while an extended beta-hairpin is found that lines the wall of the exit tunnel in the center of the 70S ribosome. In Pseudoalteromonas atlantica (strain T6c / ATCC BAA-1087), this protein is Large ribosomal subunit protein uL22.